Here is a 506-residue protein sequence, read N- to C-terminus: Maturase K (506 aa).

The protein belongs to the intron maturase 2 family. MatK subfamily.

The protein resides in the plastid. The protein localises to the chloroplast. In terms of biological role, usually encoded in the trnK tRNA gene intron. Probably assists in splicing its own and other chloroplast group II introns. The protein is Maturase K of Trifolium repens (Creeping white clover).